The chain runs to 598 residues: Elongation factor 4 (598 aa).

Residues 4-186 enclose the tr-type G domain; it reads SHIRNFAIIA…AIVSRLPAPS (183 aa). Residues 16–21 and 133–136 each bind GTP; these read DHGKST and NKID.

Belongs to the TRAFAC class translation factor GTPase superfamily. Classic translation factor GTPase family. LepA subfamily.

The protein resides in the cell inner membrane. It catalyses the reaction GTP + H2O = GDP + phosphate + H(+). Its function is as follows. Required for accurate and efficient protein synthesis under certain stress conditions. May act as a fidelity factor of the translation reaction, by catalyzing a one-codon backward translocation of tRNAs on improperly translocated ribosomes. Back-translocation proceeds from a post-translocation (POST) complex to a pre-translocation (PRE) complex, thus giving elongation factor G a second chance to translocate the tRNAs correctly. Binds to ribosomes in a GTP-dependent manner. This is Elongation factor 4 from Ehrlichia chaffeensis (strain ATCC CRL-10679 / Arkansas).